Consider the following 77-residue polypeptide: MSKSTILAIFMIVLVLGKVTKETQGQEMCRDILMKAKNCDEGTCDTLCKQKWKGNGSCFPNVYTYRKSCLCTFPCKT.

The signal sequence occupies residues 1–25 (MSKSTILAIFMIVLVLGKVTKETQG). 4 disulfide bridges follow: C29/C75, C39/C58, C44/C69, and C48/C71.

It belongs to the DEFL family.

The protein resides in the secreted. The sequence is that of Putative defensin-like protein 118 (LCR52) from Arabidopsis thaliana (Mouse-ear cress).